The primary structure comprises 53 residues: Conotoxin Cal6.31 (53 aa).

An N-terminal signal peptide occupies residues 1 to 24; it reads MKLTCVLIAAVLLLAVCQLDSADA. Cystine bridges form between Cys29–Cys43, Cys36–Cys47, and Cys42–Cys51.

This sequence belongs to the conotoxin O1 superfamily. Expressed by the venom duct.

The protein resides in the secreted. Probable neurotoxin. In Californiconus californicus (California cone), this protein is Conotoxin Cal6.31.